The chain runs to 223 residues: 3,4-dihydroxy-2-butanone 4-phosphate synthase (223 aa).

Residues 39 to 40 (RE), D44, 152 to 156 (RRGHT), and E176 contribute to the D-ribulose 5-phosphate site. E40 is a Mg(2+) binding site. Residue H155 participates in Mg(2+) binding.

It belongs to the DHBP synthase family. Homodimer. Requires Mg(2+) as cofactor. Mn(2+) is required as a cofactor.

It carries out the reaction D-ribulose 5-phosphate = (2S)-2-hydroxy-3-oxobutyl phosphate + formate + H(+). It functions in the pathway cofactor biosynthesis; riboflavin biosynthesis; 2-hydroxy-3-oxobutyl phosphate from D-ribulose 5-phosphate: step 1/1. Catalyzes the conversion of D-ribulose 5-phosphate to formate and 3,4-dihydroxy-2-butanone 4-phosphate. The chain is 3,4-dihydroxy-2-butanone 4-phosphate synthase from Desulfovibrio desulfuricans (strain ATCC 27774 / DSM 6949 / MB).